The sequence spans 278 residues: MNSISNQTIPHQASRYQAAFSRLKAEGRGAFVPFVTLGDPSPELSLKIIDTLVQNGADALELGFPFSDPLADGPVIQGANLRALAAGTTPTACFELLAKIRAKYPELPIGLLLYANLVFANGIDAFYAKAQQAGVDSVLIADVPVEEAAPFIQAAKAHGIAPIFIAPPNADSDTLAKVSQSGEGYTYLLSRAGVTGADTKAGTPVEEILAKLQEFNAPPPLLGFGIAEPAQVSAAIKAGAAGAISGSAVVKIIETHQQDEVKLLAALGEFTRTMKAAT.

Catalysis depends on proton acceptor residues Glu61 and Asp72.

Belongs to the TrpA family. In terms of assembly, tetramer of two alpha and two beta chains.

The enzyme catalyses (1S,2R)-1-C-(indol-3-yl)glycerol 3-phosphate + L-serine = D-glyceraldehyde 3-phosphate + L-tryptophan + H2O. It functions in the pathway amino-acid biosynthesis; L-tryptophan biosynthesis; L-tryptophan from chorismate: step 5/5. The alpha subunit is responsible for the aldol cleavage of indoleglycerol phosphate to indole and glyceraldehyde 3-phosphate. The protein is Tryptophan synthase alpha chain of Shewanella oneidensis (strain ATCC 700550 / JCM 31522 / CIP 106686 / LMG 19005 / NCIMB 14063 / MR-1).